We begin with the raw amino-acid sequence, 273 residues long: MYVSNGKDTCQLLGPVSLFVQTLMGMTAVIVLLVKRNYEHPRRKMIVWSYDIGKQIIGSLGIHFLNLGISILKKRRRSLFAITAKGNDDEDQCDWYFLNLLLDTTVGIPILWLCLYIIEKVLKSLHFQNIESGNYFPSKTVGSHPRKPLFSAFVKQLLIFIVGLGVMKFCVFLILNYLEDLAYWFADLILGWSDSWPNFQVFLVMFVFPILLNCFQYFCVDNVIRLHSESLTITNAENFETNTFLNDEIPDLSEVSNEVPNKDNNISSYGSII.

The Vacuolar portion of the chain corresponds to 1-13; it reads MYVSNGKDTCQLL. Residues 14-34 traverse the membrane as a helical segment; it reads GPVSLFVQTLMGMTAVIVLLV. At 35–51 the chain is on the cytoplasmic side; sequence KRNYEHPRRKMIVWSYD. The helical transmembrane segment at 52 to 72 threads the bilayer; the sequence is IGKQIIGSLGIHFLNLGISIL. At 73–97 the chain is on the vacuolar side; the sequence is KKRRRSLFAITAKGNDDEDQCDWYF. Residues 98 to 118 traverse the membrane as a helical segment; that stretch reads LNLLLDTTVGIPILWLCLYII. The Cytoplasmic portion of the chain corresponds to 119–156; it reads EKVLKSLHFQNIESGNYFPSKTVGSHPRKPLFSAFVKQ. Residues 157–177 form a helical membrane-spanning segment; the sequence is LLIFIVGLGVMKFCVFLILNY. The Vacuolar portion of the chain corresponds to 178-198; sequence LEDLAYWFADLILGWSDSWPN. Residues 199-219 form a helical membrane-spanning segment; sequence FQVFLVMFVFPILLNCFQYFC. At 220–273 the chain is on the cytoplasmic side; sequence VDNVIRLHSESLTITNAENFETNTFLNDEIPDLSEVSNEVPNKDNNISSYGSII.

The protein resides in the vacuole membrane. In Saccharomyces cerevisiae (strain ATCC 204508 / S288c) (Baker's yeast), this protein is Vacuolar membrane protein YPL162C.